Here is a 500-residue protein sequence, read N- to C-terminus: Cytochrome P450 2D15 (500 aa).

C446 lines the heme pocket.

The protein belongs to the cytochrome P450 family. Heme is required as a cofactor. In terms of tissue distribution, liver. Also detected in several other tissues.

It localises to the endoplasmic reticulum membrane. Its subcellular location is the microsome membrane. The catalysed reaction is an organic molecule + reduced [NADPH--hemoprotein reductase] + O2 = an alcohol + oxidized [NADPH--hemoprotein reductase] + H2O + H(+). In terms of biological role, high activity for the hydroxylation of bunitrolol and imipramine; low activity on debrisoquine. The polypeptide is Cytochrome P450 2D15 (CYP2D15) (Canis lupus familiaris (Dog)).